A 149-amino-acid polypeptide reads, in one-letter code: Transcriptional repressor NrdR (149 aa).

Residues 3–34 (CPFCTAEETKVIDSRLAADGYQIRRRRECIGC) fold into a zinc finger. An ATP-cone domain is found at 49 to 139 (PYIIKNNGNR…VYLSFDDIEE (91 aa)).

Belongs to the NrdR family. It depends on Zn(2+) as a cofactor.

Its function is as follows. Negatively regulates transcription of bacterial ribonucleotide reductase nrd genes and operons by binding to NrdR-boxes. The chain is Transcriptional repressor NrdR from Haemophilus ducreyi (strain 35000HP / ATCC 700724).